A 538-amino-acid polypeptide reads, in one-letter code: MPAPTQLFFPLIRNCELSRIYGTACYCHHKHLCCSPPYIPQSRPRYTPHPAYATFYRPKESWWQYTQGRRYASTPQKFYLTPPQVNSILKANEYSFKVPEFDGKNVSSVLGFDSNQLPANAPIEDRRSAATCLQTRGMLLGVFDGHAGCACSQAVSERLFYYIAVSLLPHETLLEIENAVESGRALLPILQWHKHPNDYFSKEASKLYFNSLRTYWQELIDLNTGESTDIDVKEALINAFKRLDNDISLEAQVGDPNSFLNYLVLRVAFSGATACVAHVDGVDLHVANTGDSRAMLGVQEEDGSWSAVTLSNDHNAQNEREVERLKLEHPKNEAKSVVKQDRLLGLLMPFRAFGDVKFKWSIDLQKRVIESGPDQLNDNEYTKFIPPNYYTPPYLTAEPEVTYHRLRPQDKFLVLATDGLWETMHRQDVVRIVGEYLTGMHHQQPIAVGGYKVTLGQMHGLLTERRAKMSSVFEDQNAATHLIRHAVGNNEFGAVDHERLSKMLSLPEELARMYRDDITIIVVQFNSHVVGAYQNQEQ.

The transit peptide at 1 to 71 (MPAPTQLFFP…WWQYTQGRRY (71 aa)) directs the protein to the mitochondrion. In terms of domain architecture, PPM-type phosphatase spans 109-525 (VLGFDSNQLP…DDITIIVVQF (417 aa)). Asp144 and Gly145 together coordinate Mn(2+). At Lys202 the chain carries N6-acetyllysine. Mn(2+) contacts are provided by Asp418 and Asp516.

The protein belongs to the PP2C family. In terms of assembly, heterodimer of a catalytic (PDP1) and a regulatory (PDPR) subunit. It depends on Mn(2+) as a cofactor. The cofactor is Mg(2+).

It is found in the mitochondrion. It catalyses the reaction O-phospho-L-seryl-[pyruvate dehydrogenase E1 alpha subunit] + H2O = L-seryl-[pyruvate dehydrogenase E1 alpha subunit] + phosphate. Its activity is regulated as follows. Magnesium-dependent and calcium-stimulated. PDP1 activity strongly depends on its Ca(2+)-dependent binding to the lipoyl domain of E2 subunit of component of the pyruvate dehydrogenase complex. Mitochondrial enzyme that catalyzes the dephosphorylation and concomitant reactivation of the alpha subunit of the E1 component of the pyruvate dehydrogenase complex (PDC), thereby stimulating the conversion of pyruvate into acetyl-CoA. The chain is [Pyruvate dehydrogenase [acetyl-transferring]]-phosphatase 1, mitochondrial (PDP1) from Bos taurus (Bovine).